We begin with the raw amino-acid sequence, 63 residues long: UPF0391 membrane protein lpg2415 (63 aa).

Transmembrane regions (helical) follow at residues 4 to 24 (WALI…RGVA) and 33 to 53 (VLFF…LLGG).

It belongs to the UPF0391 family.

Its subcellular location is the cell membrane. The polypeptide is UPF0391 membrane protein lpg2415 (Legionella pneumophila subsp. pneumophila (strain Philadelphia 1 / ATCC 33152 / DSM 7513)).